A 107-amino-acid chain; its full sequence is Small polypeptide DEVIL 9 (107 aa).

Residues 1-12 (MDEKWRLSKKDA) are compositionally biased toward basic and acidic residues. The tract at residues 1-79 (MDEKWRLSKK…EKGSITQKYS (79 aa)) is disordered. The helical transmembrane segment at 9 to 29 (KKDALAASCSSSSTSSKSKFS) threads the bilayer. The segment covering 13 to 65 (LAASCSSSSTSSKSKFSRSFSTSASSSKAPAFVRSSSTKCSVPSSSSSSISRS) has biased composition (low complexity). Residues 73–104 (SITQKYSSLAKEQKGRFYIMRRCVAMLVCWHK) form a required for DVL/RTFL small polypeptide activity region.

Belongs to the DVL/RTFL small polypeptides family.

The protein resides in the cell membrane. Its function is as follows. Small polypeptide acting as a regulatory molecule which coordinates cellular responses required for differentiation, growth and development, probably by restricting polar cell proliferation in lateral organs and coordinating socket cell recruitment and differentiation at trichome sites. The chain is Small polypeptide DEVIL 9 from Arabidopsis thaliana (Mouse-ear cress).